The following is an 87-amino-acid chain: MANIKQTKKRVLTNEIARQRNKAVRSRLRTESRKFHALVEAGDKDAAEKQMRVAARLYDKAVTKGVLHRNNAANKKSRMAAHLNGMK.

It belongs to the bacterial ribosomal protein bS20 family.

Its function is as follows. Binds directly to 16S ribosomal RNA. The chain is Small ribosomal subunit protein bS20 from Corynebacterium urealyticum (strain ATCC 43042 / DSM 7109).